Consider the following 435-residue polypeptide: Methylenetetrahydrofolate--tRNA-(uracil-5-)-methyltransferase TrmFO (435 aa).

9–14 serves as a coordination point for FAD; sequence GAGLAG.

It belongs to the MnmG family. TrmFO subfamily. Requires FAD as cofactor.

The protein localises to the cytoplasm. The enzyme catalyses uridine(54) in tRNA + (6R)-5,10-methylene-5,6,7,8-tetrahydrofolate + NADH + H(+) = 5-methyluridine(54) in tRNA + (6S)-5,6,7,8-tetrahydrofolate + NAD(+). It carries out the reaction uridine(54) in tRNA + (6R)-5,10-methylene-5,6,7,8-tetrahydrofolate + NADPH + H(+) = 5-methyluridine(54) in tRNA + (6S)-5,6,7,8-tetrahydrofolate + NADP(+). Catalyzes the folate-dependent formation of 5-methyl-uridine at position 54 (M-5-U54) in all tRNAs. This chain is Methylenetetrahydrofolate--tRNA-(uracil-5-)-methyltransferase TrmFO, found in Enterococcus faecalis (strain ATCC 700802 / V583).